The sequence spans 56 residues: Attractin (56 aa).

Disulfide bonds link C4/C41, C13/C33, and C20/C26.

In terms of tissue distribution, produced by the albumen gland of the egg cordons.

The protein localises to the secreted. Water-borne pheromone that attract the marine mollusk Aplysia into breeding aggregations and coordinate male and female reproductive behavior within the aggregation. This is Attractin (ATT) from Aplysia vaccaria (California black sea hare).